The chain runs to 297 residues: ATP synthase F(1) complex subunit gamma, mitochondrial (297 aa).

A mitochondrion-targeting transit peptide spans 1–25 (MFSRAGVAGLSAWTLQPQWIQVRNM). K39 bears the N6-acetyllysine mark. An N6-succinyllysine modification is found at K49. Position 55 is an N6-acetyllysine (K55). The residue at position 115 (K115) is an N6-acetyllysine; alternate. Residue K115 is modified to N6-succinyllysine; alternate. S146 carries the post-translational modification Phosphoserine. At K154 the chain carries N6-acetyllysine; alternate. Residue K154 is modified to N6-succinyllysine; alternate. At K197 the chain carries N6-acetyllysine. Position 270 is an N6-succinyllysine (K270).

Belongs to the ATPase gamma chain family. Component of the ATP synthase complex composed at least of ATP5F1A/subunit alpha, ATP5F1B/subunit beta, ATP5MC1/subunit c (homooctomer), MT-ATP6/subunit a, MT-ATP8/subunit 8, ATP5ME/subunit e, ATP5MF/subunit f, ATP5MG/subunit g, ATP5MK/subunit k, ATP5MJ/subunit j, ATP5F1C/subunit gamma, ATP5F1D/subunit delta, ATP5F1E/subunit epsilon, ATP5PF/subunit F6, ATP5PB/subunit b, ATP5PD/subunit d, ATP5PO/subunit OSCP. ATP synthase complex consists of a soluble F(1) head domain (subunits alpha(3) and beta(3)) - the catalytic core - and a membrane F(0) domain - the membrane proton channel (subunits c, a, 8, e, f, g, k and j). These two domains are linked by a central stalk (subunits gamma, delta, and epsilon) rotating inside the F1 region and a stationary peripheral stalk (subunits F6, b, d, and OSCP). Interacts with FLVCR2; this interaction occurs in the absence of heme and is disrupted upon heme binding.

The protein localises to the mitochondrion inner membrane. Subunit gamma, of the mitochondrial membrane ATP synthase complex (F(1)F(0) ATP synthase or Complex V) that produces ATP from ADP in the presence of a proton gradient across the membrane which is generated by electron transport complexes of the respiratory chain. ATP synthase complex consist of a soluble F(1) head domain - the catalytic core - and a membrane F(1) domain - the membrane proton channel. These two domains are linked by a central stalk rotating inside the F(1) region and a stationary peripheral stalk. During catalysis, ATP synthesis in the catalytic domain of F(1) is coupled via a rotary mechanism of the central stalk subunits to proton translocation. In vivo, can only synthesize ATP although its ATP hydrolase activity can be activated artificially in vitro. With the central stalk subunit delta, is essential for the biogenesis of F(1) catalytic part of the ATP synthase complex namely in the formation of F1 assembly intermediate. This chain is ATP synthase F(1) complex subunit gamma, mitochondrial, found in Pongo abelii (Sumatran orangutan).